The chain runs to 352 residues: Minor capsid protein VP2 (352 aa).

Glycine 2 carries the N-myristoyl glycine; by host lipid modification. The interval 273 to 308 (SGEFIEKTLAPGGANQRIAPQWMLPLLLGLYGTVTP) is D1. Residues 290-310 (IAPQWMLPLLLGLYGTVTPAL) traverse the membrane as a helical segment. The interval 312-352 (AYEDAPSKKKRRMSRGSSQKAKGPRASSKTSYKRRRRSTRS) is disordered. The tract at residues 313–352 (YEDAPSKKKRRMSRGSSQKAKGPRASSKTSYKRRRRSTRS) is DNA-binding. A Nuclear localization signal motif is present at residues 316 to 324 (APSKKKRRM). Basic residues predominate over residues 342–352 (SYKRRRRSTRS).

It belongs to the polyomaviruses capsid protein VP2 family. As to quaternary structure, forms homooligomers, and heterooligomers with VP3 in the endoplasmic reticulum membrane. Interacts (via D1 domain) with VP1. In terms of assembly, interacts (via D1 domain) with VP1.

It is found in the virion. The protein resides in the host nucleus. The protein localises to the host endoplasmic reticulum. Its subcellular location is the host endoplasmic reticulum membrane. Functionally, structural protein that resides within the core of the capsid surrounded by 72 VP1 pentamers. Participates in host cell receptor binding together with VP1. Following virus endocytosis and trafficking to the endoplasmic reticulum, VP2 and VP3 form oligomers and integrate into the endoplasmic reticulum membrane. Heterooligomer VP2-VP3 may create a viroporin for transporting the viral genome across the endoplasmic reticulum membrane to the cytoplasm. Nuclear entry of the viral DNA involves the selective exposure and importin recognition of VP2 or VP3 nuclear localization signal (shared C-terminus). Plays a role in virion assembly within the nucleus in particular through a DNA-binding domain located in the C-terminal region. An N-terminal myristoylation suggests a scaffold function for virion assembly. Structural protein that resides within the core of the capsid surrounded by 72 VP1 pentamers. Following virus endocytosis and trafficking to the endoplasmic reticulum, VP2 and VP3 form oligomers and integrate into the endoplasmic reticulum membrane. Heterooligomer VP2-VP3 may create a viroporin for transporting the viral genome across the endoplasmic reticulum membrane to the cytoplasm. Nuclear entry of the viral DNA involves the selective exposure and importin recognition of VP2 or VP3 nuclear localization signal (shared C-terminus). Plays a role in virion assembly within the nucleus. May participate in host cell lysis when associated with VP4. Its function is as follows. Viroporin inducing perforation of cellular membranes to trigger virus progeny release. Forms pores of 3 nm inner diameter. VP4 is expressed about 24 hours after the late structural proteins and is not incorporated into the mature virion. The sequence is that of Minor capsid protein VP2 from Simian virus 12 (strain wt100) (SV-12).